Here is a 660-residue protein sequence, read N- to C-terminus: tRNA 5-methylaminomethyl-2-thiouridine biosynthesis bifunctional protein MnmC (660 aa).

Residues 1-242 (MTDRIVPATL…KRAMLVGEFA (242 aa)) are tRNA (mnm(5)s(2)U34)-methyltransferase. The segment at 266 to 660 (IGAGLAGCAV…VRALRHGRVA (395 aa)) is FAD-dependent cmnm(5)s(2)U34 oxidoreductase.

This sequence in the N-terminal section; belongs to the methyltransferase superfamily. tRNA (mnm(5)s(2)U34)-methyltransferase family. The protein in the C-terminal section; belongs to the DAO family. It depends on FAD as a cofactor.

It localises to the cytoplasm. The enzyme catalyses 5-aminomethyl-2-thiouridine(34) in tRNA + S-adenosyl-L-methionine = 5-methylaminomethyl-2-thiouridine(34) in tRNA + S-adenosyl-L-homocysteine + H(+). Catalyzes the last two steps in the biosynthesis of 5-methylaminomethyl-2-thiouridine (mnm(5)s(2)U) at the wobble position (U34) in tRNA. Catalyzes the FAD-dependent demodification of cmnm(5)s(2)U34 to nm(5)s(2)U34, followed by the transfer of a methyl group from S-adenosyl-L-methionine to nm(5)s(2)U34, to form mnm(5)s(2)U34. This Burkholderia pseudomallei (strain K96243) protein is tRNA 5-methylaminomethyl-2-thiouridine biosynthesis bifunctional protein MnmC.